Consider the following 438-residue polypeptide: Thymidine phosphorylase (438 aa).

It belongs to the thymidine/pyrimidine-nucleoside phosphorylase family. As to quaternary structure, homodimer.

The catalysed reaction is thymidine + phosphate = 2-deoxy-alpha-D-ribose 1-phosphate + thymine. Its pathway is pyrimidine metabolism; dTMP biosynthesis via salvage pathway; dTMP from thymine: step 1/2. The enzymes which catalyze the reversible phosphorolysis of pyrimidine nucleosides are involved in the degradation of these compounds and in their utilization as carbon and energy sources, or in the rescue of pyrimidine bases for nucleotide synthesis. In Colwellia psychrerythraea (strain 34H / ATCC BAA-681) (Vibrio psychroerythus), this protein is Thymidine phosphorylase.